We begin with the raw amino-acid sequence, 1023 residues long: Phosphoenolpyruvate carboxylase (1023 aa).

Residues His-199 and Lys-669 contribute to the active site.

The protein belongs to the PEPCase type 1 family. Mg(2+) is required as a cofactor.

The enzyme catalyses oxaloacetate + phosphate = phosphoenolpyruvate + hydrogencarbonate. Functionally, forms oxaloacetate, a four-carbon dicarboxylic acid source for the tricarboxylic acid cycle. The protein is Phosphoenolpyruvate carboxylase of Trichormus variabilis (strain ATCC 29413 / PCC 7937) (Anabaena variabilis).